The chain runs to 346 residues: MNAIIWENNQLQLLDQTKLPRTIEYIQCTDYHTVGKAIKKLSVRGAPAIGAAAAYGLVVGAQQVDATDRKTFLEKLEAIAGELGATRPTAVNLRWALDRMMMRLSTAPEQNVEDLRKIMLEEAHAIYNEDVESNRKMGEYGQELLPEEARVLTHCNAGALATAGYGTALGVVRAAHEKGKKVHVYADETRPLLQGARLTSWEMVQEGIPVTLITDNMAGYLMSKKMVDCIVVGADRITANGDVANKIGTYGVAVLANHHNIPFYVAAPLSTIDMSLSSGEEIPIEERDPQEVTHHGGQPMAPEGVQVWNPAFDVTPNSLVKAIITERGVVLPPFAENLAKICCNKK.

Substrate is bound by residues 44 to 46 (RGA), Arg87, and Gln194. Asp235 acts as the Proton donor in catalysis. 245–246 (NK) is a substrate binding site.

It belongs to the eIF-2B alpha/beta/delta subunits family. MtnA subfamily.

The enzyme catalyses 5-(methylsulfanyl)-alpha-D-ribose 1-phosphate = 5-(methylsulfanyl)-D-ribulose 1-phosphate. It participates in amino-acid biosynthesis; L-methionine biosynthesis via salvage pathway; L-methionine from S-methyl-5-thio-alpha-D-ribose 1-phosphate: step 1/6. Catalyzes the interconversion of methylthioribose-1-phosphate (MTR-1-P) into methylthioribulose-1-phosphate (MTRu-1-P). The chain is Methylthioribose-1-phosphate isomerase from Desulforamulus reducens (strain ATCC BAA-1160 / DSM 100696 / MI-1) (Desulfotomaculum reducens).